The following is a 363-amino-acid chain: Aminomethyltransferase (363 aa).

Belongs to the GcvT family. As to quaternary structure, the glycine cleavage system is composed of four proteins: P, T, L and H.

The catalysed reaction is N(6)-[(R)-S(8)-aminomethyldihydrolipoyl]-L-lysyl-[protein] + (6S)-5,6,7,8-tetrahydrofolate = N(6)-[(R)-dihydrolipoyl]-L-lysyl-[protein] + (6R)-5,10-methylene-5,6,7,8-tetrahydrofolate + NH4(+). The glycine cleavage system catalyzes the degradation of glycine. The protein is Aminomethyltransferase of Nitrosomonas eutropha (strain DSM 101675 / C91 / Nm57).